We begin with the raw amino-acid sequence, 162 residues long: Probable ergosterol biosynthetic protein 28 homolog (162 aa).

The next 4 helical transmembrane spans lie at 7–25, 40–60, 69–89, and 96–116; these read AWMS…MCYA, LSRA…VLIF, IAHI…VFFY, and IVTV…LTFL.

Belongs to the ERG28 family. Expressed in tissues including muscles, intestine and neurons.

Its subcellular location is the endoplasmic reticulum membrane. The protein resides in the cell projection. The protein localises to the dendrite. Promotes the translocation of slo-1 potassium ion channels from the endoplasmic reticulum to its final destination at the plasma membrane, probably by shielding from premature proteasomal degradation in the endoplasmic reticulum. Maintains the levels of slo-1 potassium ion channel at the presynaptic neurons. In Caenorhabditis elegans, this protein is Probable ergosterol biosynthetic protein 28 homolog.